The primary structure comprises 285 residues: Eukaryotic translation initiation factor 3 subunit F-2 (285 aa).

One can recognise an MPN domain in the interval 11-145 (VFLKPLVLFQ…TRLYCAVEMG (135 aa)).

It belongs to the eIF-3 subunit F family. As to quaternary structure, component of the eukaryotic translation initiation factor 3 (eIF-3) complex. The eIF-3 complex interacts with pix.

The protein resides in the cytoplasm. Functionally, component of the eukaryotic translation initiation factor 3 (eIF-3) complex, which is involved in protein synthesis of a specialized repertoire of mRNAs and, together with other initiation factors, stimulates binding of mRNA and methionyl-tRNAi to the 40S ribosome. The eIF-3 complex specifically targets and initiates translation of a subset of mRNAs involved in cell proliferation. The protein is Eukaryotic translation initiation factor 3 subunit F-2 of Drosophila sechellia (Fruit fly).